Consider the following 496-residue polypeptide: Lysine--tRNA ligase (496 aa).

Glu407 and Glu414 together coordinate Mg(2+).

The protein belongs to the class-II aminoacyl-tRNA synthetase family. In terms of assembly, homodimer. It depends on Mg(2+) as a cofactor.

The protein localises to the cytoplasm. The catalysed reaction is tRNA(Lys) + L-lysine + ATP = L-lysyl-tRNA(Lys) + AMP + diphosphate. In Staphylococcus haemolyticus (strain JCSC1435), this protein is Lysine--tRNA ligase.